The sequence spans 926 residues: Armadillo repeat-containing protein 5 (926 aa).

The segment covering 82-104 (PAPSQAASGSAPSSVASAGSTPG) has biased composition (low complexity). Residues 82–111 (PAPSQAASGSAPSSVASAGSTPGHAPAAES) form a disordered region. ARM repeat units lie at residues 139–179 (GACR…NLAM), 181–221 (PESC…NLAD), 223–263 (PQHR…ELSR), 267–306 (RACAEQLSLGGALGPLVSLASHPKRAIREAAILILANLCA), 307–354 (QGLV…LCRE), 355–399 (AINR…DTGA), and 401–440 (GKLQALGLVPLLARQLCGEAGEEEEEGIEAASWDFPEERT). The residue at position 337 (S337) is a Phosphoserine. The interval 472–516 (WSPERCPMPEPSESVSPTPGQTSMSTPRTLRKPGRIPAATPEEPW) is disordered. Positions 484–499 (ESVSPTPGQTSMSTPR) are enriched in polar residues. The BTB domain maps to 745-813 (PDLHFVLDSG…LHGCRGCGAA (69 aa)).

In terms of assembly, substrate-recognition component of the BCR(ARMC5) E3 ubiquitin ligase complex, at least composed of CUL3, ARMC5 and RBX1. Post-translationally, ubiquitinated by a BCR (BTB-CUL3-RBX1) E3 ubiquitin ligase complex, leading to its degradation. Deubiquitinated by USP7. Expression is high in the thymus, stomach, bone marrow and lymphatic tissues (including lymph nodes and intestinal wall). Also expressed in the adrenal gland, skin and in brain structures, with noticeable levels found in the cerebellum.

Its subcellular location is the nucleus. The protein resides in the chromosome. It is found in the cytoplasm. The protein operates within protein modification; protein ubiquitination. Substrate-recognition component of a BCR (BTB-CUL3-RBX1) E3 ubiquitin ligase complex that terminates RNA polymerase II (Pol II) transcription in the promoter-proximal region of genes. The BCR(ARMC5) complex provides a quality checkpoint during transcription elongation by driving premature transcription termination of transcripts that are unfavorably configured for transcriptional elongation: the BCR(ARMC5) complex acts by mediating ubiquitination of Pol II subunit POLR2A phosphorylated at 'Ser-5' of the C-terminal domain (CTD), leading to POLR2A degradation. The BCR(ARMC5) complex acts in parallel of the integrator complex and is specific for RNA Pol II originating from the promoter-proximal zone: it does not ubiquitinate elongation-stalled RNA Pol II. The BCR(ARMC5) complex also acts as a regulator of fatty acid desaturation by mediating ubiquitination and degradation of SCAP-free SREBF1 and SREBF2. Involved in fetal development, T-cell function and adrenal gland growth homeostasis. Plays a role in steroidogenesis, modulates steroidogenic enzymes expression and cortisol production. The polypeptide is Armadillo repeat-containing protein 5 (Mus musculus (Mouse)).